Here is a 390-residue protein sequence, read N- to C-terminus: Protein phosphatase 1B (390 aa).

Residues 1 to 14 (MGAFLDKPKTEKHN) show a composition bias toward basic and acidic residues. The interval 1–20 (MGAFLDKPKTEKHNAHGAGN) is disordered. The N-myristoyl glycine moiety is linked to residue Gly2. Lys12 participates in a covalent cross-link: Glycyl lysine isopeptide (Lys-Gly) (interchain with G-Cter in ISG15). One can recognise a PPM-type phosphatase domain in the interval 23–295 (RYGLSSMQGW…DNMSIVLVCF (273 aa)). The Mn(2+) site is built by Asp60, Gly61, Asp243, and Asp286. Residues 371 to 390 (NPNKDNDGGAGDLEDSLVAL) form a disordered region. Ser386 bears the Phosphoserine mark.

Belongs to the PP2C family. In terms of assembly, monomer. Interacts with PAK6. Interacts with the phosphorylated form of IKBKB/IKKB. Mg(2+) serves as cofactor. It depends on Mn(2+) as a cofactor. Post-translationally, isgylation negatively regulates its activity. N-myristoylation is essential for the recognition of its substrates for dephosphorylation.

Its subcellular location is the cytoplasm. It localises to the cytosol. The protein localises to the membrane. The enzyme catalyses O-phospho-L-seryl-[protein] + H2O = L-seryl-[protein] + phosphate. The catalysed reaction is O-phospho-L-threonyl-[protein] + H2O = L-threonyl-[protein] + phosphate. Enzyme with a broad specificity. Dephosphorylates PRKAA1 and PRKAA2. Inhibits TBK1-mediated antiviral signaling by dephosphorylating it at 'Ser-172'. Plays an important role in the termination of TNF-alpha-mediated NF-kappa-B activation through dephosphorylating and inactivating IKBKB/IKKB. In Rattus norvegicus (Rat), this protein is Protein phosphatase 1B (Ppm1b).